Here is a 194-residue protein sequence, read N- to C-terminus: Protein GrpE (194 aa).

Composition is skewed to basic and acidic residues over residues 1 to 19 (MSKE…ENTS) and 26 to 44 (KKEA…NQKL). Residues 1 to 44 (MSKEEFPSEKNLDKEENTSKPKKAVKKEAAKGEETKKNNENQKL) are disordered.

The protein belongs to the GrpE family. Homodimer.

It localises to the cytoplasm. In terms of biological role, participates actively in the response to hyperosmotic and heat shock by preventing the aggregation of stress-denatured proteins, in association with DnaK and GrpE. It is the nucleotide exchange factor for DnaK and may function as a thermosensor. Unfolded proteins bind initially to DnaJ; upon interaction with the DnaJ-bound protein, DnaK hydrolyzes its bound ATP, resulting in the formation of a stable complex. GrpE releases ADP from DnaK; ATP binding to DnaK triggers the release of the substrate protein, thus completing the reaction cycle. Several rounds of ATP-dependent interactions between DnaJ, DnaK and GrpE are required for fully efficient folding. The protein is Protein GrpE of Lactobacillus acidophilus (strain ATCC 700396 / NCK56 / N2 / NCFM).